The following is a 194-amino-acid chain: Kallikrein-like enzyme LV-Ka (194 aa).

5 cysteine pairs are disulfide-bonded: Cys7–Cys99, Cys44–Cys192, Cys78–Cys146, Cys110–Cys125, and Cys136–Cys161. Positions 36 to 185 (LNQEDKFICP…YTEWIQSIIA (150 aa)) constitute a Peptidase S1 domain. The Charge relay system role is filled by Ser140.

Belongs to the peptidase S1 family. Snake venom subfamily. As to quaternary structure, monomer. N-glycosylated. Expressed by the venom gland.

The protein resides in the secreted. With respect to regulation, completely inhibited by the serine protease inhibitors NPGB and PMSF, partially inhibited by benzamidines, and weakly or not inhibited by SBTI and EDTA. Shows kallikrein-like activity, releasing bradykinin from kininogen. Also activates plasminogen, which is also a plasma kallikrein activity. Is active upon the kallikrein substrates S-2266 and S-2302, suggesting a preference for Arg in P1 position. In vivo, lowers blood pressure after intravenous injection in rat. This chain is Kallikrein-like enzyme LV-Ka, found in Lachesis muta muta (Bushmaster).